A 163-amino-acid chain; its full sequence is Odorant-binding protein 1a (163 aa).

Positions 1–16 (MAKFLLLALTFGLAHA) are cleaved as a signal peptide. Cystine bridges form between Cys50–Cys54 and Cys69–Cys161.

Belongs to the calycin superfamily. Lipocalin family. As to quaternary structure, may form a heterodimer with OBP1B. Post-translationally, the N-terminus may be blocked. As to expression, expressed in nasal mucosa (at protein level). Specifically detected in septal and lateral nasal glands.

The protein localises to the secreted. Its function is as follows. Binds the chemical odorant 2-isobutyl-3-methoxypyrazine. This Mus musculus (Mouse) protein is Odorant-binding protein 1a.